A 353-amino-acid chain; its full sequence is Anthranilate phosphoribosyltransferase (353 aa).

5-phospho-alpha-D-ribose 1-diphosphate is bound by residues Gly-79, Gly-82 to Asp-83, Thr-87, Asn-89 to Thr-92, Lys-107 to Ser-115, and Ser-119. Position 79 (Gly-79) interacts with anthranilate. Mg(2+) is bound at residue Ser-91. Residue Asn-110 coordinates anthranilate. Arg-165 is a binding site for anthranilate. 2 residues coordinate Mg(2+): Asp-223 and Glu-224.

The protein belongs to the anthranilate phosphoribosyltransferase family. As to quaternary structure, homodimer. Requires Mg(2+) as cofactor.

It catalyses the reaction N-(5-phospho-beta-D-ribosyl)anthranilate + diphosphate = 5-phospho-alpha-D-ribose 1-diphosphate + anthranilate. The protein operates within amino-acid biosynthesis; L-tryptophan biosynthesis; L-tryptophan from chorismate: step 2/5. Functionally, catalyzes the transfer of the phosphoribosyl group of 5-phosphorylribose-1-pyrophosphate (PRPP) to anthranilate to yield N-(5'-phosphoribosyl)-anthranilate (PRA). In Methanococcoides burtonii (strain DSM 6242 / NBRC 107633 / OCM 468 / ACE-M), this protein is Anthranilate phosphoribosyltransferase.